The sequence spans 1755 residues: Gag-Pro-Pol polyprotein (1755 aa).

Glycine 2 carries N-myristoyl glycine; by host lipidation. Basic and acidic residues-rich tracts occupy residues 151 to 169 (YDEPYEEKEKADKNEEKDH) and 178 to 191 (QRKENSEGKRKEKD). The interval 151–191 (YDEPYEEKEKADKNEEKDHVRKIKKVVQRKENSEGKRKEKD) is disordered. Residues 305 to 308 (PSAP) carry the PTAP/PSAP motif motif. 2 CCHC-type zinc fingers span residues 525–542 (PVCFSCGKTGHIRKDCKD) and 552–569 (GLCPRCKKGYHWKSECKS). Residues 572–631 (DKDGNPLPPLETNAENSKNLVKGQSPSPAQKGDGVKGSGLNPEAPPFTIHDLPRGTPGSA) form a disordered region. The span at 584–599 (NAENSKNLVKGQSPSP) shows a compositional bias: polar residues. One can recognise a Peptidase A2 domain in the interval 766 to 841 (FLGLLDTGAD…LPFTLWGRDI (76 aa)). Residue aspartate 771 is the Protease; shared with dimeric partner of the active site. The Reverse transcriptase domain occupies 905–1093 (LQLGHLEESN…DNLKYLGTHI (189 aa)). The Mg(2+) site is built by aspartate 970, aspartate 1045, aspartate 1046, aspartate 1316, glutamate 1346, aspartate 1366, and aspartate 1429. Positions 1307–1437 (LEKGIVIFTD…ADSLTRILTA (131 aa)) constitute an RNase H type-1 domain. The segment at 1436 to 1477 (TALESAQESHALHHQNAAALRFQFHITREQAREIVKLCPNCP) adopts an Integrase-type zinc-finger fold. Residues histidine 1445, histidine 1449, cysteine 1473, and cysteine 1476 each contribute to the Zn(2+) site. The Integrase catalytic domain occupies 1490–1647 (RGLKPRVLWQ…TAAERHWGPI (158 aa)). Mg(2+) is bound by residues aspartate 1501, aspartate 1558, and glutamate 1594. The segment at residues 1653-1702 (PMVMWKDLLTGSWKGPDVLITAGRGYACVFPQDAETPIWVPDRFIRPFTE) is a DNA-binding region (integrase-type). The segment at 1699–1755 (PFTERKEATPTPGTAEKTPPRDEKDQQESPKNESSPHQREDGLATSAGVDLRSGGGP) is disordered. Residues 1716–1740 (TPPRDEKDQQESPKNESSPHQREDG) show a composition bias toward basic and acidic residues.

The protein belongs to the retroviral Pol polyprotein family. Homodimer; when myristoylated. In terms of assembly, homodimer. As to quaternary structure, homooctamer. Homotrimer. Mg(2+) is required as a cofactor. In terms of processing, specific enzymatic cleavages in vivo yield mature proteins. Post-translationally, released by autocatalytic processing. Myristoylated. Myristoylation of the matrix (MA) domain mediates the transport and binding of Gag polyproteins to the host plasma membrane and is required for the assembly of viral particles.

The protein resides in the virion. It catalyses the reaction DNA(n) + a 2'-deoxyribonucleoside 5'-triphosphate = DNA(n+1) + diphosphate. The enzyme catalyses Endonucleolytic cleavage to 5'-phosphomonoester.. The catalysed reaction is dUTP + H2O = dUMP + diphosphate + H(+). With respect to regulation, inhibited by pepstatin A. In terms of biological role, matrix protein. Nucleocapsid protein p14: Binds strongly to viral nucleic acids and promote their aggregation. Also destabilizes the nucleic acids duplexes via highly structured zinc-binding motifs. Functionally, capsid protein. Its function is as follows. NC-dUTPase has dUTPase activity, thereby preventing incorporation of uracil into DNA. In terms of biological role, the aspartyl protease mediates proteolytic cleavages of Gag and Gag-Pol polyproteins during or shortly after the release of the virion from the plasma membrane. Cleavages take place as an ordered, step-wise cascade to yield mature proteins. This process is called maturation. Displays maximal activity during the budding process just prior to particle release from the cell. RT is a multifunctional enzyme that converts the viral dimeric RNA genome into dsDNA in the cytoplasm, shortly after virus entry into the cell. This enzyme displays a DNA polymerase activity that can copy either DNA or RNA templates, and a ribonuclease H (RNase H) activity that cleaves the RNA strand of RNA-DNA heteroduplexes in a partially processive 3' to 5' endonucleasic mode. Conversion of viral genomic RNA into dsDNA requires many steps. A tRNA binds to the primer-binding site (PBS) situated at the 5' end of the viral RNA. RT uses the 3' end of the tRNA primer to perfom a short round of RNA-dependent minus-strand DNA synthesis. The reading proceeds through the U5 region and ends after the repeated (R) region which is present at both ends of viral RNA. The portion of the RNA-DNA heteroduplex is digested by the RNase H, resulting in a ssDNA product attached to the tRNA primer. This ssDNA/tRNA hybridizes with the identical R region situated at the 3' end of viral RNA. This template exchange, known as minus-strand DNA strong stop transfer, can be either intra- or intermolecular. RT uses the 3' end of this newly synthesized short ssDNA to perfom the RNA-dependent minus-strand DNA synthesis of the whole template. RNase H digests the RNA template except for a polypurine tract (PPT) situated at the 5' end of the genome. It is not clear if both polymerase and RNase H activities are simultaneous. RNase H probably can proceed both in a polymerase-dependent (RNA cut into small fragments by the same RT performing DNA synthesis) and a polymerase-independent mode (cleavage of remaining RNA fragments by free RTs). Secondly, RT performs DNA-directed plus-strand DNA synthesis using the PPT that has not been removed by RNase H as primers. PPT and tRNA primers are then removed by RNase H. The 3' and 5' ssDNA PBS regions hybridize to form a circular dsDNA intermediate. Strand displacement synthesis by RT to the PBS and PPT ends produces a blunt ended, linear dsDNA copy of the viral genome that includes long terminal repeats (LTRs) at both ends. Functionally, catalyzes viral DNA integration into the host chromosome, by performing a series of DNA cutting and joining reactions. The chain is Gag-Pro-Pol polyprotein (gag-pro-pol) from Mus musculus (Mouse).